A 253-amino-acid chain; its full sequence is Imidazole glycerol phosphate synthase subunit HisF (253 aa).

Residues Asp11 and Asp130 contribute to the active site.

The protein belongs to the HisA/HisF family. As to quaternary structure, heterodimer of HisH and HisF.

Its subcellular location is the cytoplasm. The catalysed reaction is 5-[(5-phospho-1-deoxy-D-ribulos-1-ylimino)methylamino]-1-(5-phospho-beta-D-ribosyl)imidazole-4-carboxamide + L-glutamine = D-erythro-1-(imidazol-4-yl)glycerol 3-phosphate + 5-amino-1-(5-phospho-beta-D-ribosyl)imidazole-4-carboxamide + L-glutamate + H(+). The protein operates within amino-acid biosynthesis; L-histidine biosynthesis; L-histidine from 5-phospho-alpha-D-ribose 1-diphosphate: step 5/9. IGPS catalyzes the conversion of PRFAR and glutamine to IGP, AICAR and glutamate. The HisF subunit catalyzes the cyclization activity that produces IGP and AICAR from PRFAR using the ammonia provided by the HisH subunit. The polypeptide is Imidazole glycerol phosphate synthase subunit HisF (Cereibacter sphaeroides (strain KD131 / KCTC 12085) (Rhodobacter sphaeroides)).